The following is a 133-amino-acid chain: p53 and DNA damage-regulated protein 1 (133 aa).

This sequence belongs to the prefoldin subunit beta family. As to quaternary structure, component of the PAQosome complex which is responsible for the biogenesis of several protein complexes and which consists of R2TP complex members RUVBL1, RUVBL2, RPAP3 and PIH1D1, URI complex members PFDN2, PFDN6, PDRG1, UXT and URI1 as well as ASDURF, POLR2E and DNAAF10/WDR92. In terms of tissue distribution, predominantly expressed in normal testis and exhibits reduced but detectable expression in other organs.

It localises to the cytoplasm. Functionally, may play a role in chaperone-mediated protein folding. The protein is p53 and DNA damage-regulated protein 1 (PDRG1) of Homo sapiens (Human).